The following is a 352-amino-acid chain: Phosphoribosylformylglycinamidine cyclo-ligase (352 aa).

Belongs to the AIR synthase family.

It is found in the cytoplasm. It carries out the reaction 2-formamido-N(1)-(5-O-phospho-beta-D-ribosyl)acetamidine + ATP = 5-amino-1-(5-phospho-beta-D-ribosyl)imidazole + ADP + phosphate + H(+). Its pathway is purine metabolism; IMP biosynthesis via de novo pathway; 5-amino-1-(5-phospho-D-ribosyl)imidazole from N(2)-formyl-N(1)-(5-phospho-D-ribosyl)glycinamide: step 2/2. The polypeptide is Phosphoribosylformylglycinamidine cyclo-ligase (Hahella chejuensis (strain KCTC 2396)).